A 417-amino-acid polypeptide reads, in one-letter code: MKTLIILKDLTKVFDNQLILRGINLEIKQNEFVTLLGPSGCGKTTILRILGGFENPSSGEVLFQGKSILNVAAHKRPINTVFQKYALFPHLNVFENVAFGLRLKDFNSKIKDNLDINETHYKTSKANLSKTFHQELTKDLAQEKTTQITNNFNNQIEALTKDFEAKQTALKCKKINKKEQEEQIQKEVLKYIKIMGLQGLEKRTIEQLSGGQQQRVAIARALINKPQVLLLDEPLSNLDLKLKQEMQYELKEIQKNSGITFLFVTHDQEEAFTMSDKVVVMNNGEIQQIGSPEDIYNEPANRFVAQFVGESNLIKGVMKDDFLVHFDNQTFNCVDKGFRKEENVDIVIRPEDIDIVYQGKGLITGIVQSIIFKGVHWEIDVKTAQRTYIIHTTDHVELNKKIDITFNPEDIHVMEIW.

In terms of domain architecture, ABC transporter spans 5-308 (IILKDLTKVF…PANRFVAQFV (304 aa)). 37-44 (GPSGCGKT) provides a ligand contact to ATP. The interval 105–177 (DFNSKIKDNL…TALKCKKINK (73 aa)) is insert.

The protein belongs to the ABC transporter superfamily. Spermidine/putrescine importer (TC 3.A.1.11.1) family. As to quaternary structure, the complex is composed of two ATP-binding proteins (PotA), two transmembrane proteins (PotB and PotC) and a solute-binding protein (PotD).

It is found in the cell membrane. The enzyme catalyses ATP + H2O + polyamine-[polyamine-binding protein]Side 1 = ADP + phosphate + polyamineSide 2 + [polyamine-binding protein]Side 1.. In terms of biological role, part of the ABC transporter complex PotABCD involved in spermidine/putrescine import. Responsible for energy coupling to the transport system. This chain is Spermidine/putrescine import ATP-binding protein PotA, found in Aster yellows witches'-broom phytoplasma (strain AYWB).